The sequence spans 204 residues: Hydrophilin YNL190W (204 aa).

The N-terminal stretch at 1 to 20 (MKFSSVTAITLATVATVATA) is a signal peptide. Residues 35-46 (SDGSLTTTTSTH) show a composition bias toward low complexity. Residues 35–179 (SDGSLTTTTS…ARKNNAAPGP (145 aa)) are disordered. Basic residues predominate over residues 47 to 59 (TTHKYGKFNKTSK). N55, N64, N75, N84, N95, N104, N115, N124, N135, N144, and N155 each carry an N-linked (GlcNAc...) asparagine glycan. The segment covering 67–79 (GTHKYGKFNKTSK) has biased composition (basic residues). The span at 87 to 99 (GTHKYGKFNKTSK) shows a compositional bias: basic residues. The segment covering 107 to 119 (GTHKYGKFNKTSK) has biased composition (basic residues). Positions 127–139 (GTHKYGKFNKTSK) are enriched in basic residues. Residues 147 to 156 (GTHKYGKFNK) show a composition bias toward basic residues. N174 is lipidated: GPI-anchor amidated asparagine. Residues 175-204 (AAPGPSNFNSIKLFGVTAGSAAVAGALLLL) constitute a propeptide, removed in mature form.

Belongs to the PGA14 family. Post-translationally, the GPI-anchor is attached to the protein in the endoplasmic reticulum and serves to target the protein to the cell surface. There, the glucosamine-inositol phospholipid moiety is cleaved off and the GPI-modified mannoprotein is covalently attached via its lipidless GPI glycan remnant to the 1,6-beta-glucan of the outer cell wall layer.

Its subcellular location is the secreted. It is found in the cell wall. The protein resides in the membrane. In terms of biological role, hydrophilin which is essential to overcome the simple stress of the desiccation-rehydration process. The polypeptide is Hydrophilin YNL190W (Saccharomyces cerevisiae (strain ATCC 204508 / S288c) (Baker's yeast)).